Reading from the N-terminus, the 1231-residue chain is Complement factor H (1231 aa).

Residues methionine 1–alanine 18 form the signal peptide. Sushi domains are found at residues glutamate 19–lysine 82, arginine 83–valine 143, valine 144–glutamate 207, isoleucine 208–glutamate 264, lysine 265–leucine 322, proline 324–leucine 386, arginine 387–arginine 444, lysine 446–lysine 507, methionine 515–glutamate 566, arginine 567–glutamate 625, glutamine 628–valine 686, serine 689–alanine 746, lysine 751–methionine 805, glutamine 809–glutamate 866, isoleucine 868–glycine 928, leucine 929–lysine 986, threonine 987–aspartate 1045, threonine 1046–aspartate 1104, glycine 1107–histidine 1165, and serine 1170–lysine 1230. Intrachain disulfides connect cysteine 21–cysteine 66, cysteine 52–cysteine 80, cysteine 85–cysteine 129, cysteine 114–cysteine 141, cysteine 146–cysteine 192, cysteine 178–cysteine 205, cysteine 210–cysteine 251, cysteine 237–cysteine 262, cysteine 267–cysteine 309, cysteine 294–cysteine 320, cysteine 325–cysteine 374, cysteine 357–cysteine 385, cysteine 389–cysteine 431, cysteine 416–cysteine 442, cysteine 448–cysteine 494, cysteine 477–cysteine 505, cysteine 509–cysteine 553, cysteine 536–cysteine 564, cysteine 569–cysteine 611, cysteine 597–cysteine 623, cysteine 630–cysteine 673, cysteine 659–cysteine 684, cysteine 691–cysteine 733, cysteine 719–cysteine 744, cysteine 753–cysteine 792, cysteine 781–cysteine 803, cysteine 811–cysteine 853, cysteine 839–cysteine 864, cysteine 870–cysteine 915, cysteine 901–cysteine 926, cysteine 931–cysteine 973, cysteine 959–cysteine 984, cysteine 989–cysteine 1032, cysteine 1018–cysteine 1043, cysteine 1048–cysteine 1091, cysteine 1077–cysteine 1102, cysteine 1109–cysteine 1152, cysteine 1138–cysteine 1163, cysteine 1167–cysteine 1218, and cysteine 1201–cysteine 1228. Asparagine 217 is a glycosylation site (N-linked (GlcNAc...) (complex) asparagine). Asparagine 529 carries N-linked (GlcNAc...) asparagine glycosylation. Residue asparagine 718 is glycosylated (N-linked (GlcNAc...) asparagine). 2 N-linked (GlcNAc...) asparagine glycosylation sites follow: asparagine 802 and asparagine 822. Residues asparagine 882 and asparagine 911 are each glycosylated (N-linked (GlcNAc...) (complex) asparagine). A glycan (N-linked (GlcNAc...) (complex) asparagine) is linked at asparagine 1029. A glycan (N-linked (GlcNAc...) asparagine) is linked at asparagine 1095.

Homodimer. Also forms homooligomers. Interacts with complement protein C3b; this interaction inhibits complement activation. Interacts with complement protein C3d. Interacts with CR3/ITGAM; this interaction mediates adhesion of neutrophils to pathogens leading to pathogen clearance. Interacts with complement factor I. In terms of assembly, (Microbial infection) Interacts with West nile virus non-structural protein 1 (NS1); this interaction leads to the degradation of C3. As to quaternary structure, (Microbial infection) Interacts with C.albicans GPD2; the interaction is direct and leads to the degradation of C3 which enables the pathogen to evade the host innate immune system. (Microbial infection) Interacts with Neisseria meningitidis protein fHbp. In terms of assembly, (Microbial infection) Interacts with Borrelia burgdorferi outer surface protein E/OspE; this interaction recruits complement regulator factor H onto the bacterial surface to evade complement-mediated cell lysis. As to quaternary structure, (Microbial infection) Interacts with Streptococcus pneumoniae protein virulence factor choline-binding protein A/CbpAN; this interaction enables Streptococcus pneumoniae to evade surveillance by human complement system. (Microbial infection) Interacts with Staphylococcus aureus surface protein serine-aspartate repeat protein E/SdrE; this interaction sequesters CFH on the surface of S.aureus for complement evasion. In terms of assembly, (Microbial infection) Interacts with Staphylococcus aureus protein Sbi; this interaction inhibits the complement activation of the alternative pathway. As to quaternary structure, (Microbial infection) Interacts (via sushi 4-6 domains) with P.falciparum surface protein PF92; the interaction recruits CFH onto the merozoite surface preventing complement-mediated cell lysis. The interaction does not affect CFH activity. Interacts (via sushi 6-7 domains) with P.falciparum (strain NF54) GAP50; the interaction occurs in the vector mosquito midgut at the surface of the activated parasite gametocytes; the interaction protects the parasite from alternative complement pathway-mediated elimination. (Microbial infection) Interacts (via sushi 4-6 domains) with P.falciparum surface protein PF92; the interaction recruits FHL-1 isoform onto the merozoite surface preventing complement-mediated cell lysis. The interaction does not affect FHL-1 isoform activity. Interacts (via sushi 6-7 domains) with P.falciparum (strain NF54) GAP50; the interaction occurs in the vector mosquito midgut at the surface of the activated parasite gametocytes; the interaction protects the parasite from alternative complement pathway-mediated elimination. In terms of processing, sulfated on tyrosine residues. According to a report, Asn-217 is not glycosylated. Another study observed glycosylation at this position. As to expression, expressed in the retinal pigment epithelium (at protein level). CFH is one of the most abundant complement components in blood where the liver is the major source of CFH protein in vivo. in addition, CFH is secreted by additional cell types including monocytes, fibroblasts, or endothelial cells.

The protein localises to the secreted. In terms of biological role, glycoprotein that plays an essential role in maintaining a well-balanced immune response by modulating complement activation. Acts as a soluble inhibitor of complement, where its binding to self markers such as glycan structures prevents complement activation and amplification on cell surfaces. Accelerates the decay of the complement alternative pathway (AP) C3 convertase C3bBb, thus preventing local formation of more C3b, the central player of the complement amplification loop. As a cofactor of the serine protease factor I, CFH also regulates proteolytic degradation of already-deposited C3b. In addition, mediates several cellular responses through interaction with specific receptors. For example, interacts with CR3/ITGAM receptor and thereby mediates the adhesion of human neutrophils to different pathogens. In turn, these pathogens are phagocytosed and destroyed. Its function is as follows. (Microbial infection) In the mosquito midgut, binds to the surface of parasite P.falciparum gametocytes and protects the parasite from alternative complement pathway-mediated elimination. The protein is Complement factor H (CFH) of Homo sapiens (Human).